Here is a 395-residue protein sequence, read N- to C-terminus: Phosphoserine aminotransferase (395 aa).

Thr-20 carries the post-translational modification Phosphothreonine. 80 to 81 (GT) lines the pyridoxal 5'-phosphate pocket. At Ser-112 the chain carries Phosphoserine. Pyridoxal 5'-phosphate contacts are provided by Trp-113, Thr-170, Asp-194, and Gln-217. Lys-218 is modified (N6-(pyridoxal phosphate)lysine). 271–272 (NT) serves as a coordination point for pyridoxal 5'-phosphate.

The protein belongs to the class-V pyridoxal-phosphate-dependent aminotransferase family. SerC subfamily. In terms of assembly, homodimer. Requires pyridoxal 5'-phosphate as cofactor.

The enzyme catalyses O-phospho-L-serine + 2-oxoglutarate = 3-phosphooxypyruvate + L-glutamate. It catalyses the reaction 4-(phosphooxy)-L-threonine + 2-oxoglutarate = (R)-3-hydroxy-2-oxo-4-phosphooxybutanoate + L-glutamate. It participates in amino-acid biosynthesis; L-serine biosynthesis; L-serine from 3-phospho-D-glycerate: step 2/3. Phosphoserine aminotransferase (PSAT) is a pyridoxal 5'-phosphate-dependent enzyme involved in the second step of the phosphorylated pathway of serine biosynthesis. Catalyzes the reversible conversion of 3-phosphohydroxypyruvate to phosphoserine and of 3-hydroxy-2-oxo-4-phosphonooxybutanoate to phosphohydroxythreonine. Plays an indirect role in purine biosynthesis. In Saccharomyces cerevisiae (strain ATCC 204508 / S288c) (Baker's yeast), this protein is Phosphoserine aminotransferase.